The primary structure comprises 511 residues: 2-isopropylmalate synthase (511 aa).

Residues 4–266 (IRIFDTTLRD…ETGIDLSQLY (263 aa)) form the Pyruvate carboxyltransferase domain. The Mn(2+) site is built by D13, H201, H203, and N237. Positions 391–511 (VLEKIRVVSG…IAANARAQKN (121 aa)) are regulatory domain.

The protein belongs to the alpha-IPM synthase/homocitrate synthase family. LeuA type 1 subfamily. In terms of assembly, homodimer. It depends on Mn(2+) as a cofactor.

It localises to the cytoplasm. It catalyses the reaction 3-methyl-2-oxobutanoate + acetyl-CoA + H2O = (2S)-2-isopropylmalate + CoA + H(+). It functions in the pathway amino-acid biosynthesis; L-leucine biosynthesis; L-leucine from 3-methyl-2-oxobutanoate: step 1/4. Catalyzes the condensation of the acetyl group of acetyl-CoA with 3-methyl-2-oxobutanoate (2-ketoisovalerate) to form 3-carboxy-3-hydroxy-4-methylpentanoate (2-isopropylmalate). This Acetivibrio thermocellus (strain ATCC 27405 / DSM 1237 / JCM 9322 / NBRC 103400 / NCIMB 10682 / NRRL B-4536 / VPI 7372) (Clostridium thermocellum) protein is 2-isopropylmalate synthase.